Reading from the N-terminus, the 146-residue chain is Basic phospholipase A2 73 (146 aa).

Positions 1–19 (MYPAHLLVLLAVCVSLLGA) are cleaved as a signal peptide. A propeptide spanning residues 20–27 (ASIPPLPL) is cleaved from the precursor. 7 disulfide bridges follow: cysteine 38/cysteine 98, cysteine 54/cysteine 145, cysteine 56/cysteine 72, cysteine 71/cysteine 126, cysteine 78/cysteine 119, cysteine 87/cysteine 112, and cysteine 105/cysteine 117. Residues tyrosine 55, glycine 57, and glycine 59 each contribute to the Ca(2+) site. Residue histidine 75 is part of the active site. Aspartate 76 is a binding site for Ca(2+). Aspartate 120 is a catalytic residue.

The protein belongs to the phospholipase A2 family. Group I subfamily. D49 sub-subfamily. The cofactor is Ca(2+). In terms of tissue distribution, expressed by the venom gland.

It localises to the secreted. It catalyses the reaction a 1,2-diacyl-sn-glycero-3-phosphocholine + H2O = a 1-acyl-sn-glycero-3-phosphocholine + a fatty acid + H(+). Snake venom phospholipase A2 (PLA2) that inhibits neuromuscular transmission by blocking acetylcholine release from the nerve termini. PLA2 catalyzes the calcium-dependent hydrolysis of the 2-acyl groups in 3-sn-phosphoglycerides. The chain is Basic phospholipase A2 73 from Hydrophis hardwickii (Hardwick's spine-bellied seasnake).